The sequence spans 172 residues: Protein GrpE (172 aa).

The disordered stretch occupies residues 1–23 (MNQDHPEFDSEDLSQNPPETDPL).

Belongs to the GrpE family. In terms of assembly, homodimer.

The protein localises to the cytoplasm. In terms of biological role, participates actively in the response to hyperosmotic and heat shock by preventing the aggregation of stress-denatured proteins, in association with DnaK and GrpE. It is the nucleotide exchange factor for DnaK and may function as a thermosensor. Unfolded proteins bind initially to DnaJ; upon interaction with the DnaJ-bound protein, DnaK hydrolyzes its bound ATP, resulting in the formation of a stable complex. GrpE releases ADP from DnaK; ATP binding to DnaK triggers the release of the substrate protein, thus completing the reaction cycle. Several rounds of ATP-dependent interactions between DnaJ, DnaK and GrpE are required for fully efficient folding. The protein is Protein GrpE of Xanthomonas axonopodis pv. citri (strain 306).